Here is a 312-residue protein sequence, read N- to C-terminus: Small ribosomal subunit biogenesis GTPase RsgA (312 aa).

Positions 86–245 (QSFLKRPAVA…LADTPGFNRP (160 aa)) constitute a CP-type G domain. Residues 135-138 (TKID) and 187-195 (GPSGVGKTS) contribute to the GTP site. 4 residues coordinate Zn(2+): C270, C275, H277, and C283.

The protein belongs to the TRAFAC class YlqF/YawG GTPase family. RsgA subfamily. As to quaternary structure, monomer. Associates with 30S ribosomal subunit, binds 16S rRNA. Requires Zn(2+) as cofactor.

Its subcellular location is the cytoplasm. One of several proteins that assist in the late maturation steps of the functional core of the 30S ribosomal subunit. Helps release RbfA from mature subunits. May play a role in the assembly of ribosomal proteins into the subunit. Circularly permuted GTPase that catalyzes slow GTP hydrolysis, GTPase activity is stimulated by the 30S ribosomal subunit. The polypeptide is Small ribosomal subunit biogenesis GTPase RsgA (Prochlorococcus marinus (strain NATL1A)).